The chain runs to 268 residues: Phosphatidylglycerol--prolipoprotein diacylglyceryl transferase (268 aa).

The next 7 helical transmembrane spans lie at 23 to 43 (IGLR…RWLA), 62 to 82 (LLFN…VFFY), 97 to 117 (VWEG…AMIW), 132 to 152 (FVAP…FINL), 179 to 199 (SQLY…NIFI), 206 to 226 (ASVA…VEYV), and 241 to 261 (GQAL…WAYS). Residue arginine 145 participates in a 1,2-diacyl-sn-glycero-3-phospho-(1'-sn-glycerol) binding.

This sequence belongs to the Lgt family.

Its subcellular location is the cell inner membrane. It catalyses the reaction L-cysteinyl-[prolipoprotein] + a 1,2-diacyl-sn-glycero-3-phospho-(1'-sn-glycerol) = an S-1,2-diacyl-sn-glyceryl-L-cysteinyl-[prolipoprotein] + sn-glycerol 1-phosphate + H(+). It participates in protein modification; lipoprotein biosynthesis (diacylglyceryl transfer). In terms of biological role, catalyzes the transfer of the diacylglyceryl group from phosphatidylglycerol to the sulfhydryl group of the N-terminal cysteine of a prolipoprotein, the first step in the formation of mature lipoproteins. This is Phosphatidylglycerol--prolipoprotein diacylglyceryl transferase from Haemophilus influenzae (strain PittEE).